The primary structure comprises 61 residues: Large ribosomal subunit protein uL30 (61 aa).

The protein belongs to the universal ribosomal protein uL30 family. In terms of assembly, part of the 50S ribosomal subunit.

This Exiguobacterium sp. (strain ATCC BAA-1283 / AT1b) protein is Large ribosomal subunit protein uL30.